The sequence spans 484 residues: tRNA sulfurtransferase (484 aa).

The THUMP domain occupies 61 to 165 (PLILDLLKRT…GDKMLLVEAR (105 aa)). ATP contacts are provided by residues 183–184 (LI), Lys-265, Gly-287, and Gln-296. An intrachain disulfide couples Cys-344 to Cys-456. The region spanning 404–483 (LTEKDIILDI…YQNVKVFNLP (80 aa)) is the Rhodanese domain. The active-site Cysteine persulfide intermediate is Cys-456.

This sequence belongs to the ThiI family.

Its subcellular location is the cytoplasm. It carries out the reaction [ThiI sulfur-carrier protein]-S-sulfanyl-L-cysteine + a uridine in tRNA + 2 reduced [2Fe-2S]-[ferredoxin] + ATP + H(+) = [ThiI sulfur-carrier protein]-L-cysteine + a 4-thiouridine in tRNA + 2 oxidized [2Fe-2S]-[ferredoxin] + AMP + diphosphate. It catalyses the reaction [ThiS sulfur-carrier protein]-C-terminal Gly-Gly-AMP + S-sulfanyl-L-cysteinyl-[cysteine desulfurase] + AH2 = [ThiS sulfur-carrier protein]-C-terminal-Gly-aminoethanethioate + L-cysteinyl-[cysteine desulfurase] + A + AMP + 2 H(+). Its pathway is cofactor biosynthesis; thiamine diphosphate biosynthesis. In terms of biological role, catalyzes the ATP-dependent transfer of a sulfur to tRNA to produce 4-thiouridine in position 8 of tRNAs, which functions as a near-UV photosensor. Also catalyzes the transfer of sulfur to the sulfur carrier protein ThiS, forming ThiS-thiocarboxylate. This is a step in the synthesis of thiazole, in the thiamine biosynthesis pathway. The sulfur is donated as persulfide by IscS. This Haemophilus ducreyi (strain 35000HP / ATCC 700724) protein is tRNA sulfurtransferase.